The following is a 125-amino-acid chain: Glycine cleavage system H protein (125 aa).

One can recognise a Lipoyl-binding domain in the interval 23 to 105 (VSTVGITEHA…FEGGWLFKVR (83 aa)). Lysine 64 is modified (N6-lipoyllysine).

The protein belongs to the GcvH family. As to quaternary structure, the glycine cleavage system is composed of four proteins: P, T, L and H. It depends on (R)-lipoate as a cofactor.

Its function is as follows. The glycine cleavage system catalyzes the degradation of glycine. The H protein shuttles the methylamine group of glycine from the P protein to the T protein. This chain is Glycine cleavage system H protein, found in Streptomyces avermitilis (strain ATCC 31267 / DSM 46492 / JCM 5070 / NBRC 14893 / NCIMB 12804 / NRRL 8165 / MA-4680).